We begin with the raw amino-acid sequence, 121 residues long: Small ribosomal subunit protein uS13 (121 aa).

Positions 99-121 (RGQRTRTNSRTRKGPRRKIMKKK) are disordered. Residues 101–121 (QRTRTNSRTRKGPRRKIMKKK) are compositionally biased toward basic residues.

Belongs to the universal ribosomal protein uS13 family. Part of the 30S ribosomal subunit. Forms a loose heterodimer with protein S19. Forms two bridges to the 50S subunit in the 70S ribosome.

Functionally, located at the top of the head of the 30S subunit, it contacts several helices of the 16S rRNA. In the 70S ribosome it contacts the 23S rRNA (bridge B1a) and protein L5 of the 50S subunit (bridge B1b), connecting the 2 subunits; these bridges are implicated in subunit movement. Contacts the tRNAs in the A and P-sites. The sequence is that of Small ribosomal subunit protein uS13 from Thermodesulfovibrio yellowstonii (strain ATCC 51303 / DSM 11347 / YP87).